The sequence spans 427 residues: O-methyltransferase PaMT (427 aa).

2 residues coordinate S-adenosyl-L-methionine: Trp-230 and Asp-281. His-326 acts as the Proton acceptor in catalysis.

It belongs to the class I-like SAM-binding methyltransferase superfamily. Cation-independent O-methyltransferase family. COMT subfamily. It depends on S-adenosyl-L-methionine as a cofactor.

It participates in mycotoxin biosynthesis. Functionally, O-methyltransferase; part of the 2 gene clusters that mediate the biosynthesis of fusicoccins, diterpene glucosides that display phytohormone-like activity and function as potent activators of plasma membrane H(+)-ATPases in plants by modifying 14-3-3 proteins and cause the plant disease constriction canker. The first step in the pathway is performed by the fusicoccadiene synthase PaFS that possesses both prenyl transferase and terpene cyclase activity, converting isopentenyl diphosphate and dimethylallyl diphosphate into geranylgeranyl diphosphate (GGDP) and successively converting GGDP into fusicocca-2,10(14)-diene, a precursor for fusicoccin H. The second step is the oxidation at the C-8 position by the cytochrome P450 monooxygenase PaP450-2 to yield fusicocca-2,10(14)-diene-8-beta-ol. The cytochrome P450 monooxygenase PaP450-1 then catalyzes the hydroxylation at the C-16 position to produce fusicocca-2,10(14)-diene-8-beta,16-diol. The dioxygenase fc-dox then catalyzes the 16-oxydation of fusicocca-2,10(14)-diene-8-beta,16-diol to yield an aldehyde (8-beta-hydroxyfusicocca-1,10(14)-dien-16-al). The short-chain dehydrogenase/reductase fc-sdr catalyzes the reduction of the aldehyde to yield fusicocca-1,10(14)-diene-8-beta,16-diol. The next step is the hydroxylation at C-9 performed by the cytochrome P450 monooxygenase PaP450-3 that leads to fusicoccin H aglycon which is glycosylated to fusicoccin H by the O-glycosyltransferase PaGT. Hydroxylation at C-12 by the cytochrome P450 monooxygenase PaP450-4 leads then to the production of fusicoccin Q and is followed by methylation by the O-methyltransferase PaMT to yield fusicoccin P. Fusicoccin P is further converted to fusicoccin J via prenylation by the O-glucose prenyltransferase PaPT. Cytochrome P450 monooxygenase PaP450-5 then performs hydroxylation at C-19 to yield dideacetyl-fusicoccin A which is acetylated to 3'-O-deacetyl-fusicoccin A by the O-acetyltransferase PaAT-2. Finally, a another acetylation by the O-acetyltransferase PaAT-1 yields fusicoccin A. This is O-methyltransferase PaMT from Phomopsis amygdali (Fusicoccum amygdali).